The chain runs to 178 residues: Large ribosomal subunit protein uL6 (178 aa).

Belongs to the universal ribosomal protein uL6 family. As to quaternary structure, part of the 50S ribosomal subunit.

In terms of biological role, this protein binds to the 23S rRNA, and is important in its secondary structure. It is located near the subunit interface in the base of the L7/L12 stalk, and near the tRNA binding site of the peptidyltransferase center. The chain is Large ribosomal subunit protein uL6 from Halalkalibacterium halodurans (strain ATCC BAA-125 / DSM 18197 / FERM 7344 / JCM 9153 / C-125) (Bacillus halodurans).